A 263-amino-acid polypeptide reads, in one-letter code: DNA repair protein RecO (263 aa).

Residues 243-263 form a disordered region; that stretch reads DRKETARETVPTSDGTASNAV. Polar residues predominate over residues 252 to 263; the sequence is VPTSDGTASNAV.

It belongs to the RecO family.

Involved in DNA repair and RecF pathway recombination. In Neisseria meningitidis serogroup C / serotype 2a (strain ATCC 700532 / DSM 15464 / FAM18), this protein is DNA repair protein RecO.